Consider the following 629-residue polypeptide: EF-hand calcium-binding domain-containing protein 7 (629 aa).

The segment at 1-25 (MAISPRSDATFSSQKSTPSESPRTK) is disordered. Polar residues predominate over residues 7–21 (SDATFSSQKSTPSES). 2 EF-hand domains span residues 102–137 (TSKA…RGEK) and 138–173 (MTRE…TNEQ). Residues 195–229 (NHIEGSPERDPSPVPKPSPKITRKTDPETFLNKGD) form a disordered region. A phosphoserine mark is found at S200 and S212. The EF-hand 3 domain maps to 403 to 438 (EFKSTLSDIFEVIDLDGNGLLSLEEYNFFELRTSGE). D416, D418, N420, and E427 together coordinate Ca(2+).

In terms of assembly, component of the EvC complex composed of EFCAB7, IQCE, EVC2 and EVC; built from two subcomplexes, EVC2:EVC and EFCAB7:IQCE. Interacts (via EF-hand 1 and 2) with IQCE (via N-terminus); this interaction anchors the EVC-EVC2 complex in a signaling microdomain at the base of cilia and stimulates the Hedgehog (Hh) pathway. Interacts with EVC2 (via N-terminal end). Interacts with EVC.

Its subcellular location is the cell projection. The protein localises to the cilium membrane. Functionally, component of the EvC complex that positively regulates ciliary Hedgehog (Hh) signaling. Required for the localization of the EVC2:EVC subcomplex at the base of primary cilia. The protein is EF-hand calcium-binding domain-containing protein 7 (EFCAB7) of Homo sapiens (Human).